We begin with the raw amino-acid sequence, 212 residues long: Adenylate kinase (212 aa).

Gly10 to Thr15 is an ATP binding site. The NMP stretch occupies residues Ser30–Val59. AMP contacts are provided by residues Thr31, Arg36, Glu57–Val59, Gly86–Arg89, and Gln93. An LID region spans residues Gly127–Asp159. ATP is bound by residues Arg128 and Thr137–Phe138. AMP is bound by residues Arg156 and Arg167. ATP is bound at residue Gln195.

The protein belongs to the adenylate kinase family. Monomer.

The protein localises to the cytoplasm. It carries out the reaction AMP + ATP = 2 ADP. Its pathway is purine metabolism; AMP biosynthesis via salvage pathway; AMP from ADP: step 1/1. In terms of biological role, catalyzes the reversible transfer of the terminal phosphate group between ATP and AMP. Plays an important role in cellular energy homeostasis and in adenine nucleotide metabolism. The chain is Adenylate kinase from Streptococcus pneumoniae (strain JJA).